The sequence spans 170 residues: Pollen-specific protein C13 (170 aa).

Positions 1–27 are cleaved as a signal peptide; it reads MASVPAPATTTAAVILCLCVVLSCAAA. 3 cysteine pairs are disulfide-bonded: C43–C114, C46–C155, and C67–C102. The N-linked (GlcNAc...) asparagine glycan is linked to N53.

It belongs to the Ole e I family. In terms of tissue distribution, pollen.

The chain is Pollen-specific protein C13 (MGS1) from Zea mays (Maize).